Here is an 899-residue protein sequence, read N- to C-terminus: Androgen receptor (899 aa).

Residues 1–537 are modulating; that stretch reads MEVQLGLGRV…PIDYYFPPQK (537 aa). The segment at 1–566 is interaction with ZNF318; it reads MEVQLGLGRV…GSCKVFFKRA (566 aa). 2 disordered regions span residues 35 to 146 and 175 to 222; these read QNPG…LSLL and QQQQ…LGGN. Ser61 is modified (phosphoserine; by CDK9). A Phosphoserine modification is found at Ser75. Composition is skewed to low complexity over residues 94 to 103 and 175 to 193; these read QPSQQQAASE and QQQQ…QQQQ. The segment covering 210–222 has biased composition (polar residues); the sequence is APSSSKDSYLGGN. The residue at position 218 (Tyr218) is a Phosphotyrosine; by CSK. The residue at position 251 (Ser251) is a Phosphoserine. Position 262 is a phosphotyrosine; by CSK and TNK2 (Tyr262). A phosphotyrosine; by CSK mark is found at Tyr302, Tyr341, Tyr352, and Tyr357. The residue at position 358 (Tyr358) is a Phosphotyrosine; by CSK and TNK2. Lys381 participates in a covalent cross-link: Glycyl lysine isopeptide (Lys-Gly) (interchain with G-Cter in SUMO). Tyr388 is modified (phosphotyrosine; by CSK). The tract at residues 436-471 is disordered; it reads EGQLYGPGGGGGSSSPSDAGPVAPYGYTRPPQGLTS. Lys500 is covalently cross-linked (Glycyl lysine isopeptide (Lys-Gly) (interchain with G-Cter in SUMO)). A phosphotyrosine; by CSK mark is found at Tyr514 and Tyr531. The interval 531-898 is interaction with LPXN; it reads YYFPPQKTCL…GKVKPIYFHT (368 aa). The segment at residues 538 to 611 is a DNA-binding region (nuclear receptor); sequence TCLICGDEAS…AGMTLGARKL (74 aa). 2 consecutive NR C4-type zinc fingers follow at residues 539–559 and 575–599; these read CLIC…CGSC and CASR…LRKC. The interval 551 to 641 is interaction with HIPK3; it reads YGALTCGSCK…TEDPSQKMTV (91 aa). The tract at residues 571-898 is interaction with CCAR1; that stretch reads QKYLCASRND…GKVKPIYFHT (328 aa). The interval 604-898 is interaction with KAT7; that stretch reads MTLGARKLKK…GKVKPIYFHT (295 aa). Position 630 is a phosphoserine (Ser630). The 232-residue stretch at 648–879 folds into the NR LBD domain; it reads ECQPIFLNVL…DFPEMMAEII (232 aa). Residues Asn685 and Arg732 each contribute to the 17beta-hydroxy-5alpha-androstan-3-one site. Glycyl lysine isopeptide (Lys-Gly) (interchain with G-Cter in ubiquitin) cross-links involve residues Lys825 and Lys827. Position 857 (Thr857) interacts with 17beta-hydroxy-5alpha-androstan-3-one. Phosphotyrosine; by CSK is present on Tyr895.

This sequence belongs to the nuclear hormone receptor family. NR3 subfamily. In terms of assembly, binds DNA as a homodimer. Part of a ternary complex containing AR, EFCAB6/DJBP and PARK7. Interacts with HIPK3 and NR0B2 in the presence of androgen. The ligand binding domain interacts with KAT7/HBO1 in the presence of dihydrotestosterone. Interacts with EFCAB6/DJBP, PQBP1, RANBP9, SPDEF, SRA1, TGFB1I1, ZNF318 and RREB1. The AR N-terminal poly-Gln region binds Ran resulting in enhancement of AR-mediated transactivation. Ran-binding decreases as the poly-Gln length increases. Interacts with ZMIZ1/ZIMP10 and ZMIZ2/ZMIP7 which both enhance its transactivation activity. Interacts with RBAK. Interacts via the ligand-binding domain with LXXLL and FXXLF motifs from NCOA1, NCOA2, NCOA3 and MAGEA11. Interacts (via nuclear receptor DNA binding domain and nuclear receptor ligand binding domain) with NCOA4. Interacts with HIP1 (via coiled coil domain). Interacts with SLC30A9 and RAD54L2/ARIP4. Interacts with MACROD1 (via macro domain). Interacts (via ligand-binding domain) with TRIM68. Interacts with TNK2. Interacts with USP26. Interacts with RNF6. Interacts (regulated by RNF6 probably through polyubiquitination) with RNF14; regulates AR transcriptional activity. Interacts with PRMT2 and TRIM24. Interacts with RACK1. Interacts with RANBP10; this interaction enhances hormone-induced AR transcriptional activity. Interacts with PRPF6 in a hormone-independent way; this interaction enhances hormone-induced AR transcriptional activity. Interacts with STK4/MST1. Interacts with ZIPK/DAPK3. Interacts with LPXN. Interacts with MAK. Part of a complex containing AR, MAK and NCOA3. Interacts with CRY1. Interacts with CCAR1 and GATA2. Interacts with BUD31. Interacts with ARID4A. Interacts with ARID4B. Interacts (via NR LBD domain) with ZBTB7A; the interaction is direct and androgen-dependent. Interacts with NCOR1. Interacts with NCOR2. Interacts with CRY2 in a ligand-dependent manner. In terms of processing, phosphorylated in prostate cancer cells in response to several growth factors including EGF. Phosphorylation is induced by c-Src kinase (CSK). Tyr-514 is one of the major phosphorylation sites and an increase in phosphorylation and Src kinase activity is associated with prostate cancer progression. Phosphorylation by TNK2 enhances the DNA-binding and transcriptional activity. Phosphorylation at Ser-61 by CDK9 regulates AR promoter selectivity and cell growth. Phosphorylation by PAK6 leads to AR-mediated transcription inhibition. Post-translationally, sumoylated on Lys-381 (major) and Lys-500. Ubiquitinated. Deubiquitinated by USP26. 'Lys-6' and 'Lys-27'-linked polyubiquitination by RNF6 modulates AR transcriptional activity and specificity. Palmitoylated by ZDHHC7 and ZDHHC21. Palmitoylation is required for plasma membrane targeting and for rapid intracellular signaling via ERK and AKT kinases and cAMP generation.

The protein resides in the nucleus. The protein localises to the cytoplasm. Steroid hormone receptors are ligand-activated transcription factors that regulate eukaryotic gene expression and affect cellular proliferation and differentiation in target tissues. Transcription factor activity is modulated by bound coactivator and corepressor proteins like ZBTB7A that recruits NCOR1 and NCOR2 to the androgen response elements/ARE on target genes, negatively regulating androgen receptor signaling and androgen-induced cell proliferation. Transcription activation is also down-regulated by NR0B2. Activated, but not phosphorylated, by HIPK3 and ZIPK/DAPK3. This chain is Androgen receptor (Ar), found in Mus musculus (Mouse).